The sequence spans 340 residues: Alcohol dehydrogenase (340 aa).

Zn(2+)-binding residues include Cys40 and His63.

This sequence belongs to the zinc-containing alcohol dehydrogenase family. Zn(2+) is required as a cofactor.

It catalyses the reaction a primary alcohol + NAD(+) = an aldehyde + NADH + H(+). The enzyme catalyses a secondary alcohol + NAD(+) = a ketone + NADH + H(+). This chain is Alcohol dehydrogenase (adhA), found in Rhizobium meliloti (strain 1021) (Ensifer meliloti).